Consider the following 180-residue polypeptide: Cytokinin-beta-glucosidase 1 (180 aa).

Functionally, hydrolyzes cytokinin glucosides thus liberating free cytokinins. The protein is Cytokinin-beta-glucosidase 1 (ROLC1) of Linaria vulgaris (Toadflax).